The following is a 615-amino-acid chain: Leucine aminopeptidase 2-1 (615 aa).

Residues 137–139 and 261–266 each bind substrate; these read QCQ and PYGGME. Position 290 (histidine 290) interacts with Zn(2+). Catalysis depends on glutamate 291, which acts as the Proton acceptor. Zn(2+) contacts are provided by histidine 294 and glutamate 313. Residue tyrosine 380 is the Proton donor of the active site.

It belongs to the peptidase M1 family. The cofactor is Zn(2+).

The protein localises to the cytoplasm. It localises to the nucleus. The catalysed reaction is an epoxide + H2O = an ethanediol. In terms of biological role, aminopeptidase that preferentially cleaves di- and tripeptides. Also has low epoxide hydrolase activity (in vitro). Can hydrolyze the epoxide leukotriene LTA(4) but it forms preferentially 5,6-dihydroxy-7,9,11,14-eicosatetraenoic acid rather than the cytokine leukotriene B(4) as the product compared to the homologous mammalian enzyme (in vitro). This Meyerozyma guilliermondii (strain ATCC 6260 / CBS 566 / DSM 6381 / JCM 1539 / NBRC 10279 / NRRL Y-324) (Yeast) protein is Leucine aminopeptidase 2-1.